Consider the following 345-residue polypeptide: Mitochondrial substrate carrier family protein J (345 aa).

Residues 1 to 31 (MSSSHTIQETKEVHTKTNKRIQWDDLDPKRY) are Mitochondrial intermembrane-facing. Solcar repeat units follow at residues 30–118 (RYYF…VKQG), 129–217 (DLLF…SKSK), and 255–342 (EDPI…VKKL). A helical membrane pass occupies residues 32–52 (YFYNFLLGGSIDLLMFPLDVI). Residues 53 to 88 (RTRLQVQGSQNVIQSFPQYNGTFDGFKKLIRLEGKR) are Mitochondrial matrix-facing. A helical membrane pass occupies residues 89–110 (ALYKGFLTSECGYLCSRAIYFG). The Mitochondrial intermembrane segment spans residues 111 to 129 (SYEFVKQGFLKGRSDSDSD). Residues 130–150 (LLFVTTISGAISEALASVIWV) form a helical membrane-spanning segment. Residues 151 to 191 (PFDVATQSVQIQGSLSKPKYKGGSDVFKKIYGERGIKGLYK) are Mitochondrial matrix-facing. A helical membrane pass occupies residues 192 to 208 (GFGATIIRNVPYSGIWW). Over 209 to 257 (GTYEISKSKLTQFNIRQKLGLKERSSHSLAVSAEIDKNNPSHEVENEDP) the chain is Mitochondrial intermembrane. A helical membrane pass occupies residues 258–278 (IIHFISGFFAAVFATSITNPL). Residues 279 to 316 (DVAKTRLQTGVFPENEKPNFYTIIKSTIRKEGIRALWK) lie on the Mitochondrial matrix side of the membrane. The chain crosses the membrane as a helical span at residues 317–337 (GLVPSLLTSTPYSMISIFLYE). Over 338 to 345 (EVKKLSLK) the chain is Mitochondrial intermembrane.

This sequence belongs to the mitochondrial carrier (TC 2.A.29) family.

It is found in the mitochondrion inner membrane. Mitochondrial solute carriers shuttle metabolites, nucleotides, and cofactors through the mitochondrial inner membrane. The polypeptide is Mitochondrial substrate carrier family protein J (mcfJ) (Dictyostelium discoideum (Social amoeba)).